The sequence spans 236 residues: Small ribosomal subunit protein uS2c (236 aa).

The protein belongs to the universal ribosomal protein uS2 family.

It is found in the plastid. It localises to the chloroplast. This chain is Small ribosomal subunit protein uS2c (rps2), found in Draba nemorosa (Woodland whitlowgrass).